Reading from the N-terminus, the 314-residue chain is Porphobilinogen deaminase (314 aa).

Residue Cys234 is modified to S-(dipyrrolylmethanemethyl)cysteine.

Belongs to the HMBS family. In terms of assembly, monomer. Requires dipyrromethane as cofactor.

The enzyme catalyses 4 porphobilinogen + H2O = hydroxymethylbilane + 4 NH4(+). The protein operates within porphyrin-containing compound metabolism; protoporphyrin-IX biosynthesis; coproporphyrinogen-III from 5-aminolevulinate: step 2/4. Functionally, tetrapolymerization of the monopyrrole PBG into the hydroxymethylbilane pre-uroporphyrinogen in several discrete steps. The sequence is that of Porphobilinogen deaminase from Mycobacterium ulcerans (strain Agy99).